The chain runs to 353 residues: DNA integrity scanning protein DisA (353 aa).

Residues 6 to 144 (DKELMNILKI…GGIKYVLRDS (139 aa)) enclose the DAC domain. ATP is bound by residues Gly-73, Leu-91, and 104 to 108 (TRHRT).

It belongs to the DisA family. Homooctamer. Requires Mg(2+) as cofactor.

It catalyses the reaction 2 ATP = 3',3'-c-di-AMP + 2 diphosphate. In terms of biological role, participates in a DNA-damage check-point that is active prior to asymmetric division when DNA is damaged. DisA forms globular foci that rapidly scan along the chromosomes during sporulation, searching for lesions. When a lesion is present, DisA pauses at the lesion site. This triggers a cellular response that culminates in a temporary block in sporulation initiation. Its function is as follows. Also has diadenylate cyclase activity, catalyzing the condensation of 2 ATP molecules into cyclic di-AMP (c-di-AMP). c-di-AMP acts as a signaling molecule that couples DNA integrity with progression of sporulation. The rise in c-di-AMP level generated by DisA while scanning the chromosome, operates as a positive signal that advances sporulation; upon encountering a lesion, the DisA focus arrests at the damaged site and halts c-di-AMP synthesis. This Clostridium botulinum (strain Loch Maree / Type A3) protein is DNA integrity scanning protein DisA.